The primary structure comprises 402 residues: uncharacterized protein (402 aa).

This is an uncharacterized protein from Saccharomyces cerevisiae (strain ATCC 204508 / S288c) (Baker's yeast).